We begin with the raw amino-acid sequence, 485 residues long: Protein DETOXIFICATION 14 (485 aa).

12 consecutive transmembrane segments (helical) span residues 30–50, 68–88, 112–132, 147–167, 175–195, 207–227, 259–279, 288–308, 329–349, 372–392, 405–425, and 432–452; these read LSYI…LQVI, IAVS…ASAL, IVSL…IGDI, GKFA…QPLV, LILP…VLCW, GAAI…GLYM, ASMI…SGIL, VLSV…SLGA, AVYT…AIVF, MAPL…LSGV, VNLA…AFGF, and LWIG…LIVI.

It belongs to the multi antimicrobial extrusion (MATE) (TC 2.A.66.1) family.

The protein localises to the membrane. In Arabidopsis thaliana (Mouse-ear cress), this protein is Protein DETOXIFICATION 14.